Reading from the N-terminus, the 591-residue chain is tRNA 5-methylaminomethyl-2-thiouridine biosynthesis bifunctional protein MnmC (591 aa).

A tRNA (mnm(5)s(2)U34)-methyltransferase region spans residues 1–232 (MTPTAPSPLV…KRERLEAWRP (232 aa)). An FAD-dependent cmnm(5)s(2)U34 oxidoreductase region spans residues 247–591 (IGGGIAGAAL…FDSPVTRSRL (345 aa)).

It in the N-terminal section; belongs to the methyltransferase superfamily. tRNA (mnm(5)s(2)U34)-methyltransferase family. In the C-terminal section; belongs to the DAO family. The cofactor is FAD.

It localises to the cytoplasm. It carries out the reaction 5-aminomethyl-2-thiouridine(34) in tRNA + S-adenosyl-L-methionine = 5-methylaminomethyl-2-thiouridine(34) in tRNA + S-adenosyl-L-homocysteine + H(+). In terms of biological role, catalyzes the last two steps in the biosynthesis of 5-methylaminomethyl-2-thiouridine (mnm(5)s(2)U) at the wobble position (U34) in tRNA. Catalyzes the FAD-dependent demodification of cmnm(5)s(2)U34 to nm(5)s(2)U34, followed by the transfer of a methyl group from S-adenosyl-L-methionine to nm(5)s(2)U34, to form mnm(5)s(2)U34. The protein is tRNA 5-methylaminomethyl-2-thiouridine biosynthesis bifunctional protein MnmC of Caulobacter vibrioides (strain ATCC 19089 / CIP 103742 / CB 15) (Caulobacter crescentus).